The primary structure comprises 662 residues: MAVLTHGSPTPSGAHFDGKGINFTLFSAHAEQVTLCLFDEQGQERQIAMPARTGDIWHGYLPGGKPGQRYGYRVSGPFEPSRGHRFNPHKLLIDPRTRALEGKVGDDPRFTGGVSQPDVRDSAAALPKCLVIHEEYDWQGDKPPAIPWGNTVIYEAHVRGLTQLHPDIPPELRGTYAALAHPALIEHLKTLGITTLELLPVQFHIDEPRLQKMGLSNYWGYNVLAPFAVDPDYASGREGISPLRELRDAVKALHNAGIEVILDVVFNHSAELDVFGPTLCQRGIDNASYYWLTPDGEYDNITGCGNALRLSHPYVTQWVIDCLNYWRDSCHVDGFRFDLGTVLGRTPAFDQHAPLFAALAADERLSACKLIAEPWDIGLGGYQLGNFPTGFSEWNDQYRDAMRGFWLRGEVPRGTFAQHFAASSSLFEQRGRLPSASINQITAHDGFTLLDLLCFNQKHNQMNGEENRDGSDNNHSNNFGCEGLVADAAIWQRRKACQRALLTTLLLSQGTPMLLAGDEQGHSQQGNNNAYCQNNILTWLDWGSADRALMTFTADLIRLRQQIPALTQDQWWQSGDSNVQWLDSQGQALSDAAWEQGCQQQLQILLSQRWLVLINATDHECEMHLPEGEWEGIPPFGVSDHAERLTTWRGSAHTICVLIKRD.

The active-site Nucleophile is the D338. The Proton donor role is filled by E373.

Belongs to the glycosyl hydrolase 13 family.

It carries out the reaction Hydrolysis of (1-&gt;6)-alpha-D-glucosidic linkages to branches with degrees of polymerization of three or four glucose residues in limit dextrin.. It functions in the pathway glycan degradation; glycogen degradation. Its function is as follows. Removes maltotriose and maltotetraose chains that are attached by 1,6-alpha-linkage to the limit dextrin main chain, generating a debranched limit dextrin. In Yersinia pestis bv. Antiqua (strain Angola), this protein is Glycogen debranching enzyme.